Consider the following 415-residue polypeptide: Styrene monooxygenase StyA (415 aa).

It belongs to the StyA family. As to quaternary structure, homodimer. A direct interaction with the monooxygenase reductase component StyB seems not to be necessary for the enzymatic activity.

It catalyses the reaction styrene + FADH2 + O2 = (S)-styrene oxide + FAD + H2O + H(+). Its pathway is aromatic compound metabolism. In terms of biological role, styrene monooxygenase which catalyzes the first step in the aerobic styrene degradation pathway by enantioselective epoxidation of the vinyl side chain. In a two-component system, a reductase utilizes NADH to reduce FAD, which is then transferred to the oxygenase; the electron transfer is proposed to occur via a diffusing flavin. The chain is Styrene monooxygenase StyA (styA) from Pseudomonas sp.